A 417-amino-acid polypeptide reads, in one-letter code: Gamma-glutamyl phosphate reductase (417 aa).

The protein belongs to the gamma-glutamyl phosphate reductase family.

It localises to the cytoplasm. It carries out the reaction L-glutamate 5-semialdehyde + phosphate + NADP(+) = L-glutamyl 5-phosphate + NADPH + H(+). The protein operates within amino-acid biosynthesis; L-proline biosynthesis; L-glutamate 5-semialdehyde from L-glutamate: step 2/2. In terms of biological role, catalyzes the NADPH-dependent reduction of L-glutamate 5-phosphate into L-glutamate 5-semialdehyde and phosphate. The product spontaneously undergoes cyclization to form 1-pyrroline-5-carboxylate. This is Gamma-glutamyl phosphate reductase from Escherichia coli O81 (strain ED1a).